The chain runs to 329 residues: MIPRWQPASIALLLHLDTLRCHHVSVRPPRATMTSLSIKEEDIPRLDGKVVVISGGASGIGLAAANIFARAGAKIFLFDRNPPDSGEAPENSTFIKADVTSWAELKAAFAQAGHVDIAVANAGVSEEQPYFEDTFDEQGELKEPGFAVVDVNFKGTVMFTKLAVSYMRKQGKGGSVVITASATGYAPEQNLPVYSAIKSGLVGLVRSLRSTLPRFDISINAVAPAATITKLLPMDIAGPLMAAGLPVSSAHMVGLAVVYSAVARQPRMVETYGKENMLDLESKWNGRTILTLGEHYTELEEKLADLRPVWFGWRNTDLTKKQQATADFR.

A signal peptide spans 1–21 (MIPRWQPASIALLLHLDTLRC). 3 residues coordinate NADP(+): Ser58, Ile60, and Asn81. Asn91 carries an N-linked (GlcNAc...) asparagine glycan. Positions 98, 121, 161, 194, 198, and 229 each coordinate NADP(+). Tyr194 (proton acceptor) is an active-site residue. Lys198 functions as the Lowers pKa of active site Tyr in the catalytic mechanism. Residues 238–258 (GPLMAAGLPVSSAHMVGLAVV) traverse the membrane as a helical segment.

This sequence belongs to the short-chain dehydrogenases/reductases (SDR) family.

The protein localises to the membrane. Its pathway is sesquiterpene biosynthesis. In terms of biological role, short-chain dehydrogenase/reductase; part of the gene cluster that mediates the biosynthesis of PR-toxin, a bicyclic sesquiterpene belonging to the eremophilane class and acting as a mycotoxin. The first step of the pathway is catalyzed by the aristolochene synthase which performs the cyclization of trans,trans-farnesyl diphosphate (FPP) to the bicyclic sesquiterpene aristolochene. Following the formation of aristolochene, the non-oxygenated aristolochene is converted to the trioxygenated intermediate eremofortin B, via 7-epi-neopetasone. This conversion appears to involve three enzymes, a hydroxysterol oxidase-like enzyme, the quinone-oxidase prx3 that forms the quinone-type-structure in the bicyclic nucleus of aristolochene with the C8-oxo group and the C-3 hydroxyl group, and the P450 monooxygenase prx9 that introduces the epoxide at the double bond between carbons 1 and 2. No monoxy or dioxy-intermediates have been reported to be released to the broth, so these three early oxidative reactions may be coupled together. Eremofortin B is further oxidized by another P450 monooxygenase, that introduces a second epoxide between carbons 7 and 11 prior to acetylation to eremofortin A by the acetyltransferase prx11. The second epoxidation may be performed by a second P450 monooxygenase. After the acetylation step, eremofortin A is converted to eremofortin C and then to PR-toxin. First the conversion of eremofortin A to eremofortin C proceeds by oxidation of the side chain of the molecule at C-12 and is catalyzed by the short-chain oxidoreductase prx1. The cytochrome P450 monooxygenase prx8 also plays a role in this step. The primary alcohol formed at C-12 is finally oxidized by the short-chain alcohol dehydrogenase prx4 that forms PR-toxin. The polypeptide is Short-chain dehydrogenase/reductase prx4 (Penicillium rubens (strain ATCC 28089 / DSM 1075 / NRRL 1951 / Wisconsin 54-1255) (Penicillium chrysogenum)).